The primary structure comprises 88 residues: MARVTVQDAVEKIGNRFDLILTAARRARQLQLNQSAPLVPEDNDKPTVIALREIEKGLINQDIMDAQEFQKMAKVQETEEAAVALITE.

This sequence belongs to the RNA polymerase subunit omega family. The RNAP catalytic core consists of 2 alpha, 1 beta, 1 beta' and 1 omega subunit. When a sigma factor is associated with the core the holoenzyme is formed, which can initiate transcription.

The enzyme catalyses RNA(n) + a ribonucleoside 5'-triphosphate = RNA(n+1) + diphosphate. Functionally, promotes RNA polymerase assembly. Latches the N- and C-terminal regions of the beta' subunit thereby facilitating its interaction with the beta and alpha subunits. This Haemophilus influenzae (strain 86-028NP) protein is DNA-directed RNA polymerase subunit omega.